A 436-amino-acid polypeptide reads, in one-letter code: Chromosomal replication initiator protein DnaA (436 aa).

A domain I, interacts with DnaA modulators region spans residues 1 to 69; sequence MLADEVLELL…AHLFEVKTGT (69 aa). Residues 69 to 99 form a domain II region; that stretch reads TKPNVEITTQTKLKSSKQNQVNIKQIKAQST. The domain III, AAA+ region stretch occupies residues 100–314; the sequence is LLNPAYTFEN…SAIINLNAYA (215 aa). Glycine 144, glycine 146, lysine 147, and threonine 148 together coordinate ATP. The domain IV, binds dsDNA stretch occupies residues 315–436; the sequence is NLMRQEITLD…ELKNKILTKG (122 aa).

It belongs to the DnaA family. In terms of assembly, oligomerizes as a right-handed, spiral filament on DNA at oriC.

Its subcellular location is the cytoplasm. In terms of biological role, plays an essential role in the initiation and regulation of chromosomal replication. ATP-DnaA binds to the origin of replication (oriC) to initiate formation of the DNA replication initiation complex once per cell cycle. Binds the DnaA box (a 9 base pair repeat at the origin) and separates the double-stranded (ds)DNA. Forms a right-handed helical filament on oriC DNA; dsDNA binds to the exterior of the filament while single-stranded (ss)DNA is stabiized in the filament's interior. The ATP-DnaA-oriC complex binds and stabilizes one strand of the AT-rich DNA unwinding element (DUE), permitting loading of DNA polymerase. After initiation quickly degrades to an ADP-DnaA complex that is not apt for DNA replication. Binds acidic phospholipids. This Campylobacter curvus (strain 525.92) protein is Chromosomal replication initiator protein DnaA.